The sequence spans 375 residues: Negative elongation factor E (375 aa).

Residues 7-36 adopt a coiled-coil conformation; it reads GLSEEEEALQKKFNKLKKKKKALLALKKQS. The segment at 30–58 is disordered; that stretch reads LALKKQSSSGPASQGGVKRSLSEQPVVDT. S51 is subject to Phosphoserine. K78 participates in a covalent cross-link: Glycyl lysine isopeptide (Lys-Gly) (interchain with G-Cter in SUMO1); alternate. K78 is covalently cross-linked (Glycyl lysine isopeptide (Lys-Gly) (interchain with G-Cter in SUMO2); alternate). Residues 79–262 are disordered; the sequence is AETKNSGFKR…SDSFPERRAP (184 aa). K82 participates in a covalent cross-link: Glycyl lysine isopeptide (Lys-Gly) (interchain with G-Cter in SUMO2). The segment covering 90 to 101 has biased composition (basic and acidic residues); that stretch reads RTLEGKLKDPEK. S113 and S115 each carry phosphoserine. The residue at position 122 (E122) is a PolyADP-ribosyl glutamic acid. Phosphoserine is present on residues S131 and S139. E151 carries the post-translational modification PolyADP-ribosyl glutamic acid. A compositionally biased stretch (low complexity) spans 155-167; the sequence is APGAGDGPPRGFD. At E172 the chain carries PolyADP-ribosyl glutamic acid. Phosphoserine occurs at positions 179, 181, 185, and 187. Tandem repeats lie at residues 184–185, 186–187, 188–189, and 190–191. A 32 X 2 AA approximate tandem repeats of R-[DSE] region spans residues 184-247; that stretch reads RSRSRDRSHD…RDRDRERDRE (64 aa). Over residues 186 to 260 the composition is skewed to basic and acidic residues; that stretch reads RSRDRSHDRS…RRSDSFPERR (75 aa). S191 carries the phosphoserine modification. The 5; approximate repeat unit spans residues 192 to 193; it reads HD. 4 consecutive repeat copies span residues 194-195, 196-197, 198-199, and 200-201. The 10; approximate repeat unit spans residues 202-203; sequence KE. 7 consecutive repeat copies span residues 204–205, 206–207, 208–209, 210–211, 212–213, 214–215, and 216–217. An 18; approximate repeat occupies 218–219; the sequence is KD. The stretch at 220–221 is one 19; approximate repeat; sequence KD. Repeat copies occupy residues 222-223, 224-225, 226-227, and 228-229. A 24; approximate repeat occupies 230–231; it reads KE. 8 consecutive repeat copies span residues 232 to 233, 234 to 235, 236 to 237, 238 to 239, 240 to 241, 242 to 243, 244 to 245, and 246 to 247. Phosphoserine is present on residues S253 and S255. Residues 266–336 enclose the RRM domain; the sequence is NTLYVYGEDM…VQLKVNIARK (71 aa). T276 and T278 each carry phosphothreonine. 2 positions are modified to phosphoserine: S285 and S357.

This sequence belongs to the RRM NELF-E family. In terms of assembly, the NELF complex is composed of NELFA, NELFB, NELFCD and NELFE. Interacts with NELFB. In terms of processing, phosphorylated by the P-TEFb complex at sites next to its RNA recognition motif, promoting its release from chromatin. Post-translationally, sumoylated. Poly-ADP-ribosylated by PARP1, thereby preventing RNA-binding and relieving transcription pausing.

It localises to the nucleus. The protein localises to the chromosome. Essential component of the NELF complex, a complex that negatively regulates the elongation of transcription by RNA polymerase II. The NELF complex, which acts via an association with the DSIF complex and causes transcriptional pausing, is counteracted by the P-TEFb kinase complex. Provides the strongest RNA binding activity of the NELF complex and may initially recruit the NELF complex to RNA. The protein is Negative elongation factor E (Nelfe) of Mus musculus (Mouse).